A 770-amino-acid chain; its full sequence is MTLAKIELLKQLLRDNEAKTVLKQTTVDQYNIIRKFNTSRIEKNPSLRMKWAMCSNFPLALTKGDMANRIPLEYKGIQLKTNAEDIGTKGQMCSIAAVTWWNTYGPIGDTEGFEKVYESFFLRKMRLDNATWGRITFGPVERVRKRVLLNPLTKEMPPDEASNVIMEILFPKEAGIPRESTWIHRELIKEKREKLKGTMITPIVLAYMLERELVARRRFLPVAGATSAEFIEMLHCLQGENWRQIYHPGGNKLTESRSQSMIVACRKIIRRSIVASNPLELAVEIANKTVIDTEPLKSCLTAIDGGDVACDIIRAALGLKIRQRQRFGRLELKRISGRGFKNDEEILIGNGTIQKIGIWDGEEEFHVRCGECRGILKKSKMRMEKLLINSAKKEDMKDLIILCMVFSQDTRMFQGVRGEINFLNRAGQLLSPMYQLQRYFLNRSNDLFDQWGYEESPKASELHGINELMNASDYTLKGVVVTKNVIDDFSSTETEKVSITKNLSLIKRTGEVIMGANDVSELESQAQLMITYDTPKMWEMGTTKELVQNTYQWVLKNLVTLKAQFLLGKEDMFQWDAFEAFESIIPQKMAGQYSGFARAVLKQMRDQEVMKTDQFIKLLPFCFSPPKLRSNGEPYQFLRLVLKGGGENFIEVRKGSPLFSYNPQTEVLTICGRMMSLKGKIEDEERNRSMGNAVLAGFLVSGKYDPDLGDFKTIEELEKLKPGEKANILLYQGKPVKVVKRKRYSALSNDISQGIKRQRMTVESMGWALS.

A Nuclear localization signal motif is present at residues lysine 740–arginine 743.

This sequence belongs to the influenza viruses PB2 family. Influenza RNA polymerase is composed of three subunits: PB1, PB2 and PA. Interacts (via N-terminus) with PB1 (via C-terminus). Interacts with nucleoprotein NP (via N-terminus).

The protein resides in the virion. It is found in the host nucleus. Its function is as follows. Plays an essential role in transcription initiation and cap-stealing mechanism, in which cellular capped pre-mRNAs are used to generate primers for viral transcription. Recognizes and binds a wide range of cap structures of target pre-RNAs which are subsequently cleaved after 10-13 nucleotides by the viral protein PA. Plays a role in the initiation of the viral genome replication and modulates the activity of the ribonucleoprotein (RNP) complex. This is Polymerase basic protein 2 from Homo sapiens (Human).